A 324-amino-acid chain; its full sequence is Lactonase drp35 (324 aa).

The Ca(2+) site is built by Glu-47, Ser-109, Gly-111, Asp-129, Thr-132, Tyr-134, Asp-137, Asn-184, Asp-235, and Ser-236. Asp-235 acts as the Proton donor in catalysis.

It belongs to the SMP-30/CGR1 family. Ca(2+) is required as a cofactor.

It localises to the cytoplasm. Functionally, exhibits lactonase activity. Acts in cells with perturbed membrane integrity and is possibly related to the membrane homeostasis. This Staphylococcus saprophyticus subsp. saprophyticus (strain ATCC 15305 / DSM 20229 / NCIMB 8711 / NCTC 7292 / S-41) protein is Lactonase drp35 (drp35).